The chain runs to 77 residues: MNAKILALLIGVVFVGLFTVSTPAHPLCLLDPPFGFCQSSISRFAPVVGKCREYIYGGCSGKANNFQAQAKCQANCG.

Positions 1-24 (MNAKILALLIGVVFVGLFTVSTPA) are cleaved as a signal peptide. Residues 28 to 76 (CLLDPPFGFCQSSISRFAPVVGKCREYIYGGCSGKANNFQAQAKCQANC) form the BPTI/Kunitz inhibitor domain. Disulfide bonds link cysteine 28–cysteine 76, cysteine 37–cysteine 59, and cysteine 51–cysteine 72.

The protein belongs to the venom Kunitz-type family. As to expression, expressed by the venom gland.

Its subcellular location is the secreted. In terms of biological role, serine protease inhibitor that inhibits trypsin (Ki=550 nM) and thrombin (Ki=26000 nM). Exerts anticoagulant activity probably by the way of inhibiting thrombin. The protein is Kunitz-type serine protease inhibitor bicolin of Vespa bicolor (Black shield wasp).